The sequence spans 77 residues: uncharacterized protein (77 aa).

A helical transmembrane segment spans residues V13–L33.

It localises to the membrane. This is an uncharacterized protein from Saccharomyces cerevisiae (strain ATCC 204508 / S288c) (Baker's yeast).